The chain runs to 177 residues: Large ribosomal subunit protein uL6 (177 aa).

It belongs to the universal ribosomal protein uL6 family. Part of the 50S ribosomal subunit.

Its function is as follows. This protein binds to the 23S rRNA, and is important in its secondary structure. It is located near the subunit interface in the base of the L7/L12 stalk, and near the tRNA binding site of the peptidyltransferase center. The protein is Large ribosomal subunit protein uL6 of Xanthobacter autotrophicus (strain ATCC BAA-1158 / Py2).